Consider the following 147-residue polypeptide: UPF0306 protein YhbP (147 aa).

It belongs to the UPF0306 family.

This Salmonella paratyphi A (strain AKU_12601) protein is UPF0306 protein YhbP.